Here is a 341-residue protein sequence, read N- to C-terminus: Inner membrane ABC transporter permease protein YejE (341 aa).

The Cytoplasmic segment spans residues 1–21 (MSRLSPVNQARWARFRHNRRG). Residues 22 to 42 (YWSLWIFLVLFGLSLCSELIA) form a helical membrane-spanning segment. Over 43–143 (NDKPLLVRYD…ARILYGTRIS (101 aa)) the chain is Periplasmic. The ABC transmembrane type-1 domain maps to 140–332 (TRISVLFGLM…LLIFIGEAVR (193 aa)). Residues 144-164 (VLFGLMLTLCSSVMGVLAGAL) traverse the membrane as a helical segment. Residues 165 to 178 (QGYYGGKVDLWGQR) lie on the Cytoplasmic side of the membrane. A helical membrane pass occupies residues 179 to 199 (FIEVWSGMPTLFLIILLSSVV). Topologically, residues 200–201 (QP) are periplasmic. The helical transmembrane segment at 202 to 222 (NFWWLLAITVLFGWMSLVGVV) threads the bilayer. The Cytoplasmic portion of the chain corresponds to 223 to 252 (RAEFLRTRNFDYIRAAQALGVSDRSIILRH). A helical transmembrane segment spans residues 253-273 (MLPNAMVATLTFLPFILCSSI). Residues 274-307 (TTLTSLDFLGFGLPLGSPSLGELLLQGKNNLQAP) are Periplasmic-facing. Residues 308–328 (WLGITAFLSVAILLSLLIFIG) traverse the membrane as a helical segment. The Cytoplasmic portion of the chain corresponds to 329–341 (EAVRDAFDPNKAV).

This sequence belongs to the binding-protein-dependent transport system permease family. OppBC subfamily.

It localises to the cell inner membrane. In terms of biological role, probably part of a binding-protein-dependent transport system. Probably responsible for the translocation of the substrate across the membrane. The protein is Inner membrane ABC transporter permease protein YejE (yejE) of Escherichia coli (strain K12).